A 387-amino-acid polypeptide reads, in one-letter code: ATP phosphoribosyltransferase regulatory subunit (387 aa).

The protein belongs to the class-II aminoacyl-tRNA synthetase family. HisZ subfamily. Heteromultimer composed of HisG and HisZ subunits.

The protein resides in the cytoplasm. Its pathway is amino-acid biosynthesis; L-histidine biosynthesis; L-histidine from 5-phospho-alpha-D-ribose 1-diphosphate: step 1/9. Functionally, required for the first step of histidine biosynthesis. May allow the feedback regulation of ATP phosphoribosyltransferase activity by histidine. The chain is ATP phosphoribosyltransferase regulatory subunit from Ralstonia pickettii (strain 12J).